We begin with the raw amino-acid sequence, 272 residues long: Shikimate dehydrogenase (NADP(+)) (272 aa).

Shikimate-binding positions include 14–16 (SKS) and threonine 61. Lysine 65 acts as the Proton acceptor in catalysis. Glutamate 77 serves as a coordination point for NADP(+). Shikimate-binding residues include asparagine 86 and aspartate 102. Residues 126–130 (GAGGA), 149–154 (NRTVSR), and methionine 213 contribute to the NADP(+) site. Tyrosine 215 is a shikimate binding site. Glycine 237 contributes to the NADP(+) binding site.

This sequence belongs to the shikimate dehydrogenase family. As to quaternary structure, homodimer.

It carries out the reaction shikimate + NADP(+) = 3-dehydroshikimate + NADPH + H(+). It participates in metabolic intermediate biosynthesis; chorismate biosynthesis; chorismate from D-erythrose 4-phosphate and phosphoenolpyruvate: step 4/7. Involved in the biosynthesis of the chorismate, which leads to the biosynthesis of aromatic amino acids. Catalyzes the reversible NADPH linked reduction of 3-dehydroshikimate (DHSA) to yield shikimate (SA). The chain is Shikimate dehydrogenase (NADP(+)) from Shigella flexneri serotype 5b (strain 8401).